The chain runs to 396 residues: Formate-dependent phosphoribosylglycinamide formyltransferase (396 aa).

N(1)-(5-phospho-beta-D-ribosyl)glycinamide contacts are provided by residues 24–25 and glutamate 84; that span reads EL. Residues arginine 116, lysine 157, 162–167, 197–200, and glutamate 205 each bind ATP; these read SSGKGQ and EGFV. Positions 121-310 constitute an ATP-grasp domain; it reads RLAAETLGIK…EFALHVRAIL (190 aa). Mg(2+) is bound by residues glutamate 269 and glutamate 281. Residues aspartate 288, lysine 359, and 366-367 contribute to the N(1)-(5-phospho-beta-D-ribosyl)glycinamide site; that span reads RR.

It belongs to the PurK/PurT family. Homodimer.

It carries out the reaction N(1)-(5-phospho-beta-D-ribosyl)glycinamide + formate + ATP = N(2)-formyl-N(1)-(5-phospho-beta-D-ribosyl)glycinamide + ADP + phosphate + H(+). The protein operates within purine metabolism; IMP biosynthesis via de novo pathway; N(2)-formyl-N(1)-(5-phospho-D-ribosyl)glycinamide from N(1)-(5-phospho-D-ribosyl)glycinamide (formate route): step 1/1. Functionally, involved in the de novo purine biosynthesis. Catalyzes the transfer of formate to 5-phospho-ribosyl-glycinamide (GAR), producing 5-phospho-ribosyl-N-formylglycinamide (FGAR). Formate is provided by PurU via hydrolysis of 10-formyl-tetrahydrofolate. This chain is Formate-dependent phosphoribosylglycinamide formyltransferase, found in Psychromonas ingrahamii (strain DSM 17664 / CCUG 51855 / 37).